The chain runs to 200 residues: General odorant-binding protein 70 (200 aa).

An N-terminal signal peptide occupies residues Met-1 to Ala-29. Intrachain disulfides connect Cys-105-Cys-174 and Cys-152-Cys-183.

This sequence belongs to the PBP/GOBP family.

Its subcellular location is the secreted. Present in the aqueous fluid surrounding olfactory sensory dendrites and are thought to aid in the capture and transport of hydrophobic odorants into and through this fluid. The protein is General odorant-binding protein 70 (Obp70) of Anopheles gambiae (African malaria mosquito).